Reading from the N-terminus, the 175-residue chain is Ribosome maturation factor RimM (175 aa).

The 78-residue stretch at 98 to 175 (EGEYYWHQLE…EMRVDWDADF (78 aa)) folds into the PRC barrel domain.

The protein belongs to the RimM family. As to quaternary structure, binds ribosomal protein uS19.

The protein localises to the cytoplasm. Functionally, an accessory protein needed during the final step in the assembly of 30S ribosomal subunit, possibly for assembly of the head region. Essential for efficient processing of 16S rRNA. May be needed both before and after RbfA during the maturation of 16S rRNA. It has affinity for free ribosomal 30S subunits but not for 70S ribosomes. The sequence is that of Ribosome maturation factor RimM from Pseudomonas aeruginosa (strain ATCC 15692 / DSM 22644 / CIP 104116 / JCM 14847 / LMG 12228 / 1C / PRS 101 / PAO1).